The following is a 159-amino-acid chain: NADH-quinone oxidoreductase subunit B 2 (159 aa).

4 residues coordinate [4Fe-4S] cluster: C37, C38, C102, and C132.

This sequence belongs to the complex I 20 kDa subunit family. In terms of assembly, NDH-1 is composed of 14 different subunits. Subunits NuoB, C, D, E, F, and G constitute the peripheral sector of the complex. [4Fe-4S] cluster is required as a cofactor.

The protein localises to the cell inner membrane. It carries out the reaction a quinone + NADH + 5 H(+)(in) = a quinol + NAD(+) + 4 H(+)(out). NDH-1 shuttles electrons from NADH, via FMN and iron-sulfur (Fe-S) centers, to quinones in the respiratory chain. Couples the redox reaction to proton translocation (for every two electrons transferred, four hydrogen ions are translocated across the cytoplasmic membrane), and thus conserves the redox energy in a proton gradient. In Azoarcus sp. (strain BH72), this protein is NADH-quinone oxidoreductase subunit B 2.